The sequence spans 191 residues: Corticoliberin (191 aa).

The first 24 residues, 1–24, serve as a signal peptide directing secretion; that stretch reads MRLPLLVSAGVLLVALLPCPPCRA. Positions 25–148 are excised as a propeptide; it reads LLSRGPVLGA…RQEAPERERR (124 aa). The tract at residues 115 to 153 is disordered; that stretch reads PLPRRPLDSPSGPAERGAENALSSRQEAPERERRSEEPP. The segment covering 141–151 has biased composition (basic and acidic residues); that stretch reads EAPERERRSEE. At Ile-189 the chain carries Isoleucine amide.

Belongs to the sauvagine/corticotropin-releasing factor/urotensin I family. As to quaternary structure, interacts (via C-terminus) with CRFR1 (via N-terminal extracellular domain). In terms of tissue distribution, produced by the hypothalamus.

It localises to the secreted. Functionally, hormone regulating the release of corticotropin from pituitary gland. Induces NLRP6 in intestinal epithelial cells, hence may influence gut microbiota profile. This Sus scrofa (Pig) protein is Corticoliberin (CRH).